Here is a 741-residue protein sequence, read N- to C-terminus: uncharacterized protein (741 aa).

A signal peptide spans methionine 1 to alanine 18. Disordered regions lie at residues proline 142 to aspartate 300, glutamate 423 to glycine 528, and glutamate 646 to aspartate 681. The segment covering glutamate 147–threonine 165 has biased composition (acidic residues). 2 stretches are compositionally biased toward low complexity: residues valine 183–glutamate 197 and serine 205–threonine 266. Residues asparagine 232 and asparagine 241 are each glycosylated (N-linked (GlcNAc...) asparagine). Residues glutamate 423–threonine 432 are compositionally biased toward acidic residues. Low complexity predominate over residues threonine 433 to threonine 451. N-linked (GlcNAc...) asparagine glycosylation is found at asparagine 461 and asparagine 511. The span at proline 500 to asparagine 511 shows a compositional bias: acidic residues. A compositionally biased stretch (low complexity) spans glutamate 512–glycine 528. Over residues glutamate 646 to aspartate 656 the composition is skewed to polar residues. Over residues alanine 657–threonine 671 the composition is skewed to acidic residues. N-linked (GlcNAc...) asparagine glycosylation occurs at asparagine 669. Asparagine 719 carries the GPI-anchor amidated asparagine lipid modification. Positions alanine 720 to isoleucine 741 are cleaved as a propeptide — removed in mature form.

The protein resides in the cell membrane. This is an uncharacterized protein from Candida albicans (strain SC5314 / ATCC MYA-2876) (Yeast).